Here is a 372-residue protein sequence, read N- to C-terminus: NAD(P)H-quinone oxidoreductase subunit 1 (372 aa).

The next 8 helical transmembrane spans lie at 27-47 (IIWL…GVLV), 97-117 (ILFT…WLIV), 128-148 (VGIG…GLLM), 176-196 (LALS…IDIV), 204-224 (ILSW…ICAL), 266-286 (ILSA…PIPV), 308-328 (SIGI…AILL), and 347-367 (FLLP…LALP).

It belongs to the complex I subunit 1 family. As to quaternary structure, NDH-1 is composed of at least 11 different subunits.

The protein resides in the cellular thylakoid membrane. It catalyses the reaction a plastoquinone + NADH + (n+1) H(+)(in) = a plastoquinol + NAD(+) + n H(+)(out). The catalysed reaction is a plastoquinone + NADPH + (n+1) H(+)(in) = a plastoquinol + NADP(+) + n H(+)(out). In terms of biological role, NDH-1 shuttles electrons from an unknown electron donor, via FMN and iron-sulfur (Fe-S) centers, to quinones in the respiratory and/or the photosynthetic chain. The immediate electron acceptor for the enzyme in this species is believed to be plastoquinone. Couples the redox reaction to proton translocation, and thus conserves the redox energy in a proton gradient. This is NAD(P)H-quinone oxidoreductase subunit 1 from Prochlorococcus marinus (strain MIT 9515).